Consider the following 843-residue polypeptide: MEAEESSSSVVPLPQDVQSVVRGGFRCLLCGVNIPNRPSLTDHLSGRRHVRLHEERDKRNQQQERSVYVSNFPRETSEEQLRDVFQKISPVRNIVMDKDRGLYAIVEFESKDGMCAALEEPQIKLSGKRLRVKPREKKEFQRKKGGSPRTLQPPDPEALSKELLNCADVEQQIKKLVSLCSPSHHESHLRELLLSLLQETFTEFFPGCQLLPFGSSVNGFEISGCDLDLYLDLGDDEAENVEGKAEKEIQNREESSTDMEVSMEDPETERKEEEMEIGNSKNDEDEDVTPGLSLKGLSSEEILEVVGKVLRHCVPGVHGVQSVPTARRPVIHFQHKTSGLRGDVTLNNRLALRNSSFLRLCSDLDARVPQLVYTVRYWARVNQLAGNPFGGGPLLNNYALTLLVFFFLQTRNPPVLPTLVHLREETANEVPQVIDGWDCSFPSDPAQVKESGNQQSLSSLLSEFFSFYASLDLHLLILCPCNGLTIPLPFSSPPPAWSEGFRLGPLNIQDPFELSHNVCGNVSSRAARRFISHCAAAARICRTPNYNLHSTSHPWGITPILLPPPTERECVGRGGTEISIPLGGVSPEKTYAAVSKVFVDVLLCTLEEGREDSCQEGKALELSTKHAKAQCKVEKNEVGGELGEQEVPCKAEQNNTKEASKQKSIFKTEEGMTESARRKREMTEPCMSDMTNGKKRRLEFTRGIWDHHLATSAMEEEMCGEAHKDSKTKIDYSNNGTAQWELLVWHRVWEGRRKERRRKQKGEADGVELEIAVSQALALEKEDKCDGPLMKLILTAQLTVKESLQLYLTPKFDPQGLSSTFFHFLESYLPRMVAQIQGCGDPV.

The segment at 25–55 (FRCLLCGVNIPNRPSLTDHLSGRRHVRLHEE) adopts a Matrin-type zinc-finger fold. Residues 54 to 126 (EERDKRNQQQ…ALEEPQIKLS (73 aa)) enclose the RRM domain. Positions 134–146 (PREKKEFQRKKGG) are enriched in basic residues. The tract at residues 134–157 (PREKKEFQRKKGGSPRTLQPPDPE) is disordered. An ATP-binding site is contributed by Ser215. 2 residues coordinate Mg(2+): Asp226 and Asp228. UTP contacts are provided by Asp226 and Asp228. Basic and acidic residues predominate over residues 241 to 255 (VEGKAEKEIQNREES). The segment at 241–292 (VEGKAEKEIQNREESSTDMEVSMEDPETERKEEEMEIGNSKNDEDEDVTPGL) is disordered. ATP is bound at residue Asn354. Positions 354, 376, 398, and 516 each coordinate UTP. One can recognise a PAP-associated domain in the interval 456–516 (SLSSLLSEFF…NIQDPFELSH (61 aa)). Positions 564 to 837 (PPTERECVGR…YLPRMVAQIQ (274 aa)) are KA1; binds the bulging loops of U6 snRNA but is dispensable for terminal uridylyltransferase activity. The tract at residues 653–691 (QNNTKEASKQKSIFKTEEGMTESARRKREMTEPCMSDMT) is disordered. The segment covering 658–670 (EASKQKSIFKTEE) has biased composition (basic and acidic residues).

This sequence belongs to the DNA polymerase type-B-like family. Associates with the cleavage and polyadenylation specificity factor (CPSF) complex. Requires Mg(2+) as cofactor. It depends on Mn(2+) as a cofactor.

The protein localises to the nucleus. The protein resides in the nucleolus. Its subcellular location is the nucleus speckle. It carries out the reaction RNA(n) + UTP = RNA(n)-3'-uridine ribonucleotide + diphosphate. It catalyses the reaction RNA(n) + ATP = RNA(n)-3'-adenine ribonucleotide + diphosphate. Poly(A) polymerase that creates the 3'-poly(A) tail of specific pre-mRNAs. In addition to polyadenylation, it is also required for the 3'-end cleavage of pre-mRNAs: binds to the 3'UTR of targeted pre-mRNAs and promotes the recruitment and assembly of the CPSF complex on the 3'UTR of pre-mRNAs. In addition to adenylyltransferase activity, also has uridylyltransferase activity. However, the ATP ratio is higher than UTP in cells, suggesting that it functions primarily as a poly(A) polymerase. This is Speckle targeted PIP5K1A-regulated poly(A) polymerase (tut1) from Xenopus tropicalis (Western clawed frog).